The sequence spans 370 residues: UDP-N-acetylglucosamine--N-acetylmuramyl-(pentapeptide) pyrophosphoryl-undecaprenol N-acetylglucosamine transferase (370 aa).

UDP-N-acetyl-alpha-D-glucosamine contacts are provided by residues 15-17 (TGG), N129, R170, S200, I253, and Q298.

The protein belongs to the glycosyltransferase 28 family. MurG subfamily.

The protein resides in the cell inner membrane. The enzyme catalyses di-trans,octa-cis-undecaprenyl diphospho-N-acetyl-alpha-D-muramoyl-L-alanyl-D-glutamyl-meso-2,6-diaminopimeloyl-D-alanyl-D-alanine + UDP-N-acetyl-alpha-D-glucosamine = di-trans,octa-cis-undecaprenyl diphospho-[N-acetyl-alpha-D-glucosaminyl-(1-&gt;4)]-N-acetyl-alpha-D-muramoyl-L-alanyl-D-glutamyl-meso-2,6-diaminopimeloyl-D-alanyl-D-alanine + UDP + H(+). Its pathway is cell wall biogenesis; peptidoglycan biosynthesis. In terms of biological role, cell wall formation. Catalyzes the transfer of a GlcNAc subunit on undecaprenyl-pyrophosphoryl-MurNAc-pentapeptide (lipid intermediate I) to form undecaprenyl-pyrophosphoryl-MurNAc-(pentapeptide)GlcNAc (lipid intermediate II). The sequence is that of UDP-N-acetylglucosamine--N-acetylmuramyl-(pentapeptide) pyrophosphoryl-undecaprenol N-acetylglucosamine transferase from Salinibacter ruber (strain DSM 13855 / M31).